The following is a 348-amino-acid chain: Enkurin domain-containing protein 1 (348 aa).

3 disordered regions span residues 1–65 (MCEG…RPGG), 84–195 (GGIS…PSAK), and 262–282 (AEARQHSQPDPAMPPGHTRMP). Ser-93 is modified (phosphoserine). Positions 95–127 (KRKDPKDHEKENMRRIREIQRRFREQEHSREQG) are enriched in basic and acidic residues. Ser-138 is subject to Phosphoserine. The span at 139 to 148 (PKYDKVESRV) shows a compositional bias: basic and acidic residues. The Enkurin domain maps to 253-345 (ERRDLWRREA…IFSRPKVFVK (93 aa)).

As to quaternary structure, interacts with alpha-tubulin. Interacts (via central region) with CCP110 (via N-terminal region); competes with CEP97 for binding to CCP110.

The protein resides in the cytoplasm. Its subcellular location is the cytoskeleton. The protein localises to the microtubule organizing center. It localises to the centrosome. It is found in the centriole. The protein resides in the cilium basal body. Its subcellular location is the cell projection. The protein localises to the cilium. It localises to the spindle. It is found in the spindle pole. The protein resides in the cilium axoneme. Microtubule-binding protein which regulates microtubule organization and stability. Promotes the stability of astral microtubules and facilitates the proper orientation of the mitotic spindle. This allows the oriented division of basal keratinocytes and contributes to epidermal stratification. Required for the assembly of both primary and motile cilia. Destabilizes the interaction between CCP110 and CEP97 by competing with CEP97 for binding to CCP110 which promotes the removal of CCP110 and CEP97 from the mother centriole and allows the initiation of ciliogenesis. The sequence is that of Enkurin domain-containing protein 1 (ENKD1) from Bos taurus (Bovine).